Consider the following 37-residue polypeptide: Large ribosomal subunit protein bL36 (37 aa).

Belongs to the bacterial ribosomal protein bL36 family.

In Dehalococcoides mccartyi (strain ATCC BAA-2266 / KCTC 15142 / 195) (Dehalococcoides ethenogenes (strain 195)), this protein is Large ribosomal subunit protein bL36.